Consider the following 148-residue polypeptide: 3-dehydroquinate dehydratase (148 aa).

Tyr-26 serves as the catalytic Proton acceptor. The substrate site is built by Asn-75, His-81, and Asp-88. Residue His-101 is the Proton donor of the active site. Residues 102–103 (LS) and Arg-112 contribute to the substrate site.

Belongs to the type-II 3-dehydroquinase family. As to quaternary structure, homododecamer.

It carries out the reaction 3-dehydroquinate = 3-dehydroshikimate + H2O. It participates in metabolic intermediate biosynthesis; chorismate biosynthesis; chorismate from D-erythrose 4-phosphate and phosphoenolpyruvate: step 3/7. Functionally, catalyzes a trans-dehydration via an enolate intermediate. The polypeptide is 3-dehydroquinate dehydratase (Shewanella frigidimarina (strain NCIMB 400)).